The primary structure comprises 79 residues: uncharacterized protein (79 aa).

A helical membrane pass occupies residues 15-37 (KSIVSVLALTSLGCGVFVISATA).

The protein resides in the membrane. This is an uncharacterized protein from Dictyostelium discoideum (Social amoeba).